The following is a 481-amino-acid chain: Glutamyl-tRNA(Gln) amidotransferase subunit A (481 aa).

Residues K74 and S149 each act as charge relay system in the active site. The active-site Acyl-ester intermediate is the S173.

It belongs to the amidase family. GatA subfamily. In terms of assembly, heterotrimer of A, B and C subunits.

It carries out the reaction L-glutamyl-tRNA(Gln) + L-glutamine + ATP + H2O = L-glutaminyl-tRNA(Gln) + L-glutamate + ADP + phosphate + H(+). In terms of biological role, allows the formation of correctly charged Gln-tRNA(Gln) through the transamidation of misacylated Glu-tRNA(Gln) in organisms which lack glutaminyl-tRNA synthetase. The reaction takes place in the presence of glutamine and ATP through an activated gamma-phospho-Glu-tRNA(Gln). The protein is Glutamyl-tRNA(Gln) amidotransferase subunit A of Francisella tularensis subsp. tularensis (strain WY96-3418).